The primary structure comprises 530 residues: Chaperone Ric-8A (530 aa).

Ser435 carries the post-translational modification Phosphoserine. Phosphothreonine occurs at positions 440 and 442. Residues Ser501, Ser522, Ser523, and Ser527 each carry the phosphoserine modification.

The protein belongs to the synembryn family. As to quaternary structure, interacts with GDP-bound G alpha proteins GNAI1, GNAO1 and GNAQ, and with GNA13 with lower affinity. Does not interact with G-alpha proteins when they are in complex with subunits beta and gamma. Interacts (via C-terminus) with RGS14; the interaction stimulates the dissociation of the complex between RGS14 and the active GTP-bound form of GNAI1. Interacts with NCS1; interaction is favored in the absence of Ca(2+) and myristoylation of NCS1 is not required. In terms of tissue distribution, expressed in neurons and neurites of the CA1 and CA2 subregions of the hippocampus (at protein level). In adult brain, it is expressed in the neocortex, hippocampus and cerebellum as well as in the pineal gland and ependymal layer.

It is found in the cytoplasm. Its subcellular location is the cell cortex. Functionally, chaperone that specifically binds and folds nascent G alpha proteins prior to G protein heterotrimer formation, promoting their stability and activity: folds GNAI1, GNAO1, GNA13 and GNAQ. Does not fold G(s) G-alpha proteins GNAS nor GNAL. Also acts as a guanine nucleotide exchange factor (GEF) for G alpha proteins by stimulating exchange of bound GDP for free GTP. Involved in regulation of microtubule pulling forces during mitotic movement of chromosomes by stimulating G(i)-alpha protein (GNAI1), possibly leading to release G(i)-alpha-GTP and NuMA proteins from the NuMA-GPSM2-G(i)-alpha-GDP complex. Also acts as an activator for G(q)-alpha (GNAQ) protein by enhancing the G(q)-coupled receptor-mediated ERK activation. This chain is Chaperone Ric-8A, found in Mus musculus (Mouse).